The primary structure comprises 318 residues: MTNIVFMGTPAFAAPILEGIIENGYNVLAVVTQPDRPVGRKRVLHASPVKEVALKYGIKVFQPVKLSGSDEMQEIIDLQPDLIVTAAYGQFLPTKLIESVKIAAINVHGSLLPKYRGGAPVQYSIMNGDDKTGVTIIYMVKKMDAGDMLAQAELKIESTDDTGTIFEKMSILGRDVLLETLPKIISGNVEAVKQDENKVVFSPNIKPEEEILHLNLEAKEIDWKTRALRPAPGAYFKNFKGKRTKLWSIKPLEEKTEFAPGYVVNVDKHELKVSAYNGTVYSIIELQPAGKQKMDITSYLNGVGQGLKIGQRIIEDEE.

A (6S)-5,6,7,8-tetrahydrofolate-binding site is contributed by 110–113; that stretch reads SLLP.

This sequence belongs to the Fmt family.

It catalyses the reaction L-methionyl-tRNA(fMet) + (6R)-10-formyltetrahydrofolate = N-formyl-L-methionyl-tRNA(fMet) + (6S)-5,6,7,8-tetrahydrofolate + H(+). Functionally, attaches a formyl group to the free amino group of methionyl-tRNA(fMet). The formyl group appears to play a dual role in the initiator identity of N-formylmethionyl-tRNA by promoting its recognition by IF2 and preventing the misappropriation of this tRNA by the elongation apparatus. This chain is Methionyl-tRNA formyltransferase, found in Ligilactobacillus salivarius (strain UCC118) (Lactobacillus salivarius).